The chain runs to 134 residues: D-ribose pyranase (134 aa).

Catalysis depends on His20, which acts as the Proton donor. Substrate-binding positions include Asp28, His101, and 123–125 (YSN).

It belongs to the RbsD / FucU family. RbsD subfamily. In terms of assembly, homodecamer.

Its subcellular location is the cytoplasm. It carries out the reaction beta-D-ribopyranose = beta-D-ribofuranose. It functions in the pathway carbohydrate metabolism; D-ribose degradation; D-ribose 5-phosphate from beta-D-ribopyranose: step 1/2. Its function is as follows. Catalyzes the interconversion of beta-pyran and beta-furan forms of D-ribose. This is D-ribose pyranase from Pseudomonas syringae pv. tomato (strain ATCC BAA-871 / DC3000).